The primary structure comprises 179 residues: Inosine/xanthosine triphosphatase (179 aa).

Residue glutamate 71 participates in Mg(2+) binding. Residue 71-72 (EA) coordinates substrate.

It belongs to the YjjX NTPase family. As to quaternary structure, homodimer. Requires Mg(2+) as cofactor. Mn(2+) serves as cofactor.

The enzyme catalyses XTP + H2O = XDP + phosphate + H(+). It carries out the reaction ITP + H2O = IDP + phosphate + H(+). Functionally, phosphatase that hydrolyzes non-canonical purine nucleotides such as XTP and ITP to their respective diphosphate derivatives. Probably excludes non-canonical purines from DNA/RNA precursor pool, thus preventing their incorporation into DNA/RNA and avoiding chromosomal lesions. In Shewanella sp. (strain MR-4), this protein is Inosine/xanthosine triphosphatase.